We begin with the raw amino-acid sequence, 603 residues long: Elongation factor 4 (603 aa).

The 185-residue stretch at 7–191 folds into the tr-type G domain; it reads DNIRNFSIVA…AIVTRLPPPK (185 aa). GTP contacts are provided by residues 19–24 and 138–141; these read DHGKST and NKVD.

This sequence belongs to the TRAFAC class translation factor GTPase superfamily. Classic translation factor GTPase family. LepA subfamily.

Its subcellular location is the cell inner membrane. The catalysed reaction is GTP + H2O = GDP + phosphate + H(+). Functionally, required for accurate and efficient protein synthesis under certain stress conditions. May act as a fidelity factor of the translation reaction, by catalyzing a one-codon backward translocation of tRNAs on improperly translocated ribosomes. Back-translocation proceeds from a post-translocation (POST) complex to a pre-translocation (PRE) complex, thus giving elongation factor G a second chance to translocate the tRNAs correctly. Binds to ribosomes in a GTP-dependent manner. The protein is Elongation factor 4 of Rhodopseudomonas palustris (strain ATCC BAA-98 / CGA009).